A 331-amino-acid polypeptide reads, in one-letter code: GATA transcription factor 12 (331 aa).

Disordered regions lie at residues 30 to 49 and 105 to 138; these read ENDV…SSNF and SGFK…SVPA. Positions 34-47 are enriched in low complexity; that stretch reads VADSTTTTTITDSS. Positions 116–134 are enriched in polar residues; sequence DTGSPENPNSSSPIFTTDV. The short motif at 139-146 is the Nuclear localization signal element; the sequence is KARSKRSR. The segment at 174–218 is disordered; it reads SSQQHLSPPTSPPLLMAPLGKKQAVDGGHRRKKDVSSPESGGAEE. A GATA-type zinc finger spans residues 215 to 269; it reads GAEERRCLHCATDKTPQWRTGPMGPKTLCNACGVRYKSGRLVPEYRPAASPTFVL.

It belongs to the type IV zinc-finger family. Class A subfamily. As to expression, expressed in the vascular cylinder of roots. Expressed in the differentiation zone of the root stele.

It is found in the nucleus. Functionally, transcriptional activator that specifically binds 5'-GATA-3' or 5'-GAT-3' motifs within gene promoters. May be involved in the regulation of some light-responsive genes. Transcription activator involved in xylem formation. Functions upstream of NAC030/VND7, a master switch of xylem vessel differentiation. In Arabidopsis thaliana (Mouse-ear cress), this protein is GATA transcription factor 12.